The sequence spans 454 residues: Septin-10 (454 aa).

Positions 63-329 constitute a Septin-type G domain; sequence QGFCFNILCV…ELYRRCKLEE (267 aa). The tract at residues 73 to 80 is G1 motif; sequence GETGIGKS. Residues 73 to 80, glycine 128, 209 to 217, glycine 263, and arginine 278 each bind GTP; these read GETGIGKS and KADTVSKTE. Residues 125 to 128 form a G3 motif region; that stretch reads NTVG. Residues 208–211 form a G4 motif region; sequence AKAD.

It belongs to the TRAFAC class TrmE-Era-EngA-EngB-Septin-like GTPase superfamily. Septin GTPase family. As to quaternary structure, septins polymerize into heterooligomeric protein complexes that form filaments, and can associate with cellular membranes, actin filaments and microtubules. GTPase activity is required for filament formation. Interacts with ADGB. Proteolytically cleaved in vitro in a calmodulin-dependent manner. In terms of tissue distribution, widely expressed. Abundantly expressed in heart and kidney, placenta, skeletal muscles, liver and lung, as well as various tumor cell lines.

The protein resides in the cytoplasm. It localises to the cytoskeleton. The protein localises to the cell projection. Its subcellular location is the cilium. It is found in the flagellum. Functionally, filament-forming cytoskeletal GTPase. May play a role in cytokinesis (Potential). This is Septin-10 from Homo sapiens (Human).